Consider the following 449-residue polypeptide: Glutamyl-tRNA reductase (449 aa).

Residues 58 to 61, serine 121, 126 to 128, and glutamine 132 contribute to the substrate site; these read TCNR and ETQ. Residue cysteine 59 is the Nucleophile of the active site. 203 to 208 contributes to the NADP(+) binding site; sequence GLGEMA.

Belongs to the glutamyl-tRNA reductase family. Homodimer.

The catalysed reaction is (S)-4-amino-5-oxopentanoate + tRNA(Glu) + NADP(+) = L-glutamyl-tRNA(Glu) + NADPH + H(+). It functions in the pathway porphyrin-containing compound metabolism; protoporphyrin-IX biosynthesis; 5-aminolevulinate from L-glutamyl-tRNA(Glu): step 1/2. Catalyzes the NADPH-dependent reduction of glutamyl-tRNA(Glu) to glutamate 1-semialdehyde (GSA). This is Glutamyl-tRNA reductase from Helicobacter pylori (strain HPAG1).